A 154-amino-acid chain; its full sequence is UPF0756 membrane protein RBAM_026200 (154 aa).

The next 4 helical transmembrane spans lie at 14-34 (AIAL…LIVI), 54-74 (WGVT…DIGF), 87-107 (WIAL…LTLL), and 117-137 (LVIG…GPLI).

This sequence belongs to the UPF0756 family.

Its subcellular location is the cell membrane. The protein is UPF0756 membrane protein RBAM_026200 of Bacillus velezensis (strain DSM 23117 / BGSC 10A6 / LMG 26770 / FZB42) (Bacillus amyloliquefaciens subsp. plantarum).